Consider the following 318-residue polypeptide: Isoaspartyl peptidase/L-asparaginase (318 aa).

Thr-180 serves as the catalytic Nucleophile. Substrate is bound by residues 208-211 and 229-232; these read RVSD and TGIG.

This sequence belongs to the Ntn-hydrolase family. In terms of assembly, heterotetramer of two alpha and two beta chains arranged as a dimer of alpha/beta heterodimers. In terms of processing, cleaved into an alpha and beta chain by autocatalysis; this activates the enzyme. The N-terminal residue of the beta subunit is responsible for the nucleophile hydrolase activity.

The catalysed reaction is Cleavage of a beta-linked Asp residue from the N-terminus of a polypeptide.. Degrades proteins damaged by L-isoaspartyl residue formation (also known as beta-Asp residues). Probably performs the final step in the degradation of the reserve polymer cyanophycin (depolymerizes the building block L-beta-Asp-Arg). Also has L-asparaginase activity. The polypeptide is Isoaspartyl peptidase/L-asparaginase (Nostoc sp. (strain PCC 7120 / SAG 25.82 / UTEX 2576)).